Consider the following 144-residue polypeptide: DHIDLEFDVGQCIQASYTAPTTGRTSVNIVASDGTVVLHVDYRKHWGGNPSTGKPWQNILIINSKLGGSWGTEEKVHDVETTIVNYDYTQCGQDADFSLELNQKDIATYAYRSPVNTVSRVQFDDQGYDAVLRKLCVVYPAPSK.

A Galectin domain is found at 1–138 (DHIDLEFDVG…DAVLRKLCVV (138 aa)).

Its function is as follows. Lectin that binds beta-galactoside and a wide array of complex carbohydrates. This is Galectin b from Aplysina lactuca (Marine sponge).